The sequence spans 66 residues: Large ribosomal subunit protein bL33c (66 aa).

This sequence belongs to the bacterial ribosomal protein bL33 family.

Its subcellular location is the plastid. It localises to the chloroplast. In Saccharum officinarum (Sugarcane), this protein is Large ribosomal subunit protein bL33c.